The primary structure comprises 286 residues: Phosphoribosylaminoimidazole-succinocarboxamide synthase (286 aa).

This sequence belongs to the SAICAR synthetase family.

It catalyses the reaction 5-amino-1-(5-phospho-D-ribosyl)imidazole-4-carboxylate + L-aspartate + ATP = (2S)-2-[5-amino-1-(5-phospho-beta-D-ribosyl)imidazole-4-carboxamido]succinate + ADP + phosphate + 2 H(+). It functions in the pathway purine metabolism; IMP biosynthesis via de novo pathway; 5-amino-1-(5-phospho-D-ribosyl)imidazole-4-carboxamide from 5-amino-1-(5-phospho-D-ribosyl)imidazole-4-carboxylate: step 1/2. In Pasteurella multocida (strain Pm70), this protein is Phosphoribosylaminoimidazole-succinocarboxamide synthase (purC).